A 697-amino-acid polypeptide reads, in one-letter code: uncharacterized protein (697 aa).

A DNA-binding region (zn(2)-C6 fungal-type) is located at residues 24 to 51; the sequence is CIRCRQKKIKCSGEKPSCQACSNNKVEC. A helical membrane pass occupies residues 500–520; sequence YIMSPFVGFSILTAATIHMLL.

The protein resides in the nucleus membrane. This is an uncharacterized protein from Schizosaccharomyces pombe (strain 972 / ATCC 24843) (Fission yeast).